Reading from the N-terminus, the 215-residue chain is Holliday junction branch migration complex subunit RuvA (215 aa).

The tract at residues Met1 to Cys67 is domain I. A domain II region spans residues Asp68 to Leu146. The segment at Ser147–Pro158 is flexible linker. The segment at Leu159 to Ala215 is domain III.

It belongs to the RuvA family. Homotetramer. Forms an RuvA(8)-RuvB(12)-Holliday junction (HJ) complex. HJ DNA is sandwiched between 2 RuvA tetramers; dsDNA enters through RuvA and exits via RuvB. An RuvB hexamer assembles on each DNA strand where it exits the tetramer. Each RuvB hexamer is contacted by two RuvA subunits (via domain III) on 2 adjacent RuvB subunits; this complex drives branch migration. In the full resolvosome a probable DNA-RuvA(4)-RuvB(12)-RuvC(2) complex forms which resolves the HJ.

The protein localises to the cytoplasm. Functionally, the RuvA-RuvB-RuvC complex processes Holliday junction (HJ) DNA during genetic recombination and DNA repair, while the RuvA-RuvB complex plays an important role in the rescue of blocked DNA replication forks via replication fork reversal (RFR). RuvA specifically binds to HJ cruciform DNA, conferring on it an open structure. The RuvB hexamer acts as an ATP-dependent pump, pulling dsDNA into and through the RuvAB complex. HJ branch migration allows RuvC to scan DNA until it finds its consensus sequence, where it cleaves and resolves the cruciform DNA. The polypeptide is Holliday junction branch migration complex subunit RuvA (Synechococcus sp. (strain WH7803)).